Reading from the N-terminus, the 118-residue chain is V-type proton ATPase subunit G 1 (118 aa).

N-acetylalanine is present on alanine 2. Residues 25–90 (ARKRKARRLK…VQGMQSSQQR (66 aa)) form a disordered region. A compositionally biased stretch (basic and acidic residues) spans 35–56 (QAKEEAQMEVEQYRREREHEFQ). Polar residues-rich tracts occupy residues 57–69 (SKQQ…QGNL) and 78–89 (RHQVQGMQSSQQ).

It belongs to the V-ATPase G subunit family. As to quaternary structure, V-ATPase is a heteromultimeric enzyme made up of two complexes: the ATP-hydrolytic V1 complex and the proton translocation V0 complex. The V1 complex consists of three catalytic AB heterodimers that form a heterohexamer, three peripheral stalks each consisting of EG heterodimers, one central rotor including subunits D and F, and the regulatory subunits C and H. The proton translocation complex V0 consists of the proton transport subunit a, a ring of proteolipid subunits c9c'', rotary subunit d, subunits e and f, and the accessory subunits ATP6AP1/Ac45 and ATP6AP2/PRR.

The protein resides in the apical cell membrane. Its function is as follows. Subunit of the V1 complex of vacuolar(H+)-ATPase (V-ATPase), a multisubunit enzyme composed of a peripheral complex (V1) that hydrolyzes ATP and a membrane integral complex (V0) that translocates protons. V-ATPase is responsible for acidifying and maintaining the pH of intracellular compartments and in some cell types, is targeted to the plasma membrane, where it is responsible for acidifying the extracellular environment. In aerobic conditions, involved in intracellular iron homeostasis, thus triggering the activity of Fe(2+) prolyl hydroxylase (PHD) enzymes, and leading to HIF1A hydroxylation and subsequent proteasomal degradation. The sequence is that of V-type proton ATPase subunit G 1 (ATP6V1G1) from Pan troglodytes (Chimpanzee).